The chain runs to 119 residues: Large ribosomal subunit protein bL20c (119 aa).

It belongs to the bacterial ribosomal protein bL20 family.

Its subcellular location is the plastid. The protein localises to the chloroplast. Binds directly to 23S ribosomal RNA and is necessary for the in vitro assembly process of the 50S ribosomal subunit. It is not involved in the protein synthesizing functions of that subunit. The protein is Large ribosomal subunit protein bL20c of Nandina domestica (Heavenly bamboo).